A 1183-amino-acid polypeptide reads, in one-letter code: DNA-directed RNA polymerase subunit beta (1183 aa).

A compositionally biased stretch (acidic residues) spans 1149 to 1162 (DNEIEMADVDDEDA). The disordered stretch occupies residues 1149–1183 (DNEIEMADVDDEDATERKVDLQQKDVPETQKETTD). Basic and acidic residues predominate over residues 1163–1183 (TERKVDLQQKDVPETQKETTD).

Belongs to the RNA polymerase beta chain family. The RNAP catalytic core consists of 2 alpha, 1 beta, 1 beta' and 1 omega subunit. When a sigma factor is associated with the core the holoenzyme is formed, which can initiate transcription.

The catalysed reaction is RNA(n) + a ribonucleoside 5'-triphosphate = RNA(n+1) + diphosphate. Its function is as follows. DNA-dependent RNA polymerase catalyzes the transcription of DNA into RNA using the four ribonucleoside triphosphates as substrates. This is DNA-directed RNA polymerase subunit beta from Staphylococcus haemolyticus (strain JCSC1435).